Reading from the N-terminus, the 292-residue chain is Large ribosomal subunit protein uL4 (292 aa).

Composition is skewed to basic and acidic residues over residues 1 to 33 and 42 to 51; these read MVEV…DKTA and KVSDKAESTP. Disordered stretches follow at residues 1-59 and 132-158; these read MVEV…VKTS and GTHK…TGKA.

The protein belongs to the universal ribosomal protein uL4 family. As to quaternary structure, part of the 50S ribosomal subunit.

In terms of biological role, one of the primary rRNA binding proteins, this protein initially binds near the 5'-end of the 23S rRNA. It is important during the early stages of 50S assembly. It makes multiple contacts with different domains of the 23S rRNA in the assembled 50S subunit and ribosome. Functionally, forms part of the polypeptide exit tunnel. In Mycoplasmopsis pulmonis (strain UAB CTIP) (Mycoplasma pulmonis), this protein is Large ribosomal subunit protein uL4.